The primary structure comprises 124 residues: Fluoride-specific ion channel FluC (124 aa).

4 helical membrane-spanning segments follow: residues 4-24, 34-54, 67-87, and 100-120; these read FLAV…LGLW, LGTL…LAWF, FVIT…AEVV, and LIAF…FYSL. Residues Gly74 and Thr77 each contribute to the Na(+) site.

This sequence belongs to the fluoride channel Fluc/FEX (TC 1.A.43) family.

It localises to the cell inner membrane. It carries out the reaction fluoride(in) = fluoride(out). With respect to regulation, na(+) is not transported, but it plays an essential structural role and its presence is essential for fluoride channel function. Its function is as follows. Fluoride-specific ion channel. Important for reducing fluoride concentration in the cell, thus reducing its toxicity. In Thiobacillus denitrificans (strain ATCC 25259 / T1), this protein is Fluoride-specific ion channel FluC.